A 414-amino-acid chain; its full sequence is 2,3-diketo-5-methylthiopentyl-1-phosphate enolase (414 aa).

The Proton acceptor role is filled by Lys-99. Residues Lys-148, 174 to 177 (KDDE), His-265, Gly-338, and 360 to 361 (GG) contribute to the substrate site. The Mg(2+) site is built by Lys-174, Asp-176, and Glu-177. Lys-174 is subject to N6-carboxylysine.

This sequence belongs to the RuBisCO large chain family. Type IV subfamily. As to quaternary structure, homodimer. Mg(2+) serves as cofactor.

It carries out the reaction 5-methylsulfanyl-2,3-dioxopentyl phosphate = 2-hydroxy-5-methylsulfanyl-3-oxopent-1-enyl phosphate. It functions in the pathway amino-acid biosynthesis; L-methionine biosynthesis via salvage pathway; L-methionine from S-methyl-5-thio-alpha-D-ribose 1-phosphate: step 3/6. In terms of biological role, catalyzes the enolization of 2,3-diketo-5-methylthiopentyl-1-phosphate (DK-MTP-1-P) into 2-hydroxy-3-keto-5-methylthiopentenyl-1-phosphate (HK-MTPenyl-1-P). The polypeptide is 2,3-diketo-5-methylthiopentyl-1-phosphate enolase (Bacillus anthracis (strain CDC 684 / NRRL 3495)).